An 859-amino-acid chain; its full sequence is DNA mismatch repair protein MutS (859 aa).

618–625 (GPNMGGKS) contacts ATP. The interval 803–829 (RDHDVQQNTEQQGTQQNMSFVPSAPSP) is disordered. Positions 808 to 819 (QQNTEQQGTQQN) are enriched in low complexity.

Belongs to the DNA mismatch repair MutS family.

Functionally, this protein is involved in the repair of mismatches in DNA. It is possible that it carries out the mismatch recognition step. This protein has a weak ATPase activity. The chain is DNA mismatch repair protein MutS from Shewanella pealeana (strain ATCC 700345 / ANG-SQ1).